Consider the following 396-residue polypeptide: Elongation factor Tu (396 aa).

Residues 10–207 (KPHCNIGTIG…VDAYIPQPPR (198 aa)) form the tr-type G domain. Positions 19-26 (GHVDHGKT) are G1. Residue 19-26 (GHVDHGKT) coordinates GTP. Thr-26 is a Mg(2+) binding site. The G2 stretch occupies residues 60–64 (GITIS). The interval 81–84 (DCPG) is G3. Residues 81 to 85 (DCPGH) and 136 to 139 (NKVD) each bind GTP. The G4 stretch occupies residues 136–139 (NKVD). The G5 stretch occupies residues 174-176 (SAL).

The protein belongs to the TRAFAC class translation factor GTPase superfamily. Classic translation factor GTPase family. EF-Tu/EF-1A subfamily. As to quaternary structure, monomer.

The protein resides in the cytoplasm. The catalysed reaction is GTP + H2O = GDP + phosphate + H(+). Functionally, GTP hydrolase that promotes the GTP-dependent binding of aminoacyl-tRNA to the A-site of ribosomes during protein biosynthesis. This chain is Elongation factor Tu, found in Novosphingobium aromaticivorans (strain ATCC 700278 / DSM 12444 / CCUG 56034 / CIP 105152 / NBRC 16084 / F199).